A 346-amino-acid polypeptide reads, in one-letter code: Annexin A1 (346 aa).

Residue alanine 2 is modified to N-acetylalanine. The residue at position 5 (serine 5) is a Phosphoserine; by TRPM7. An Isoglutamyl lysine isopeptide (Gln-Lys) (interchain with K-?) cross-link involves residue glutamine 19. A Phosphotyrosine; by EGFR modification is found at tyrosine 21. Serine 27 bears the Phosphoserine; by PKC mark. 2 positions are modified to phosphoserine: serine 34 and serine 37. Phosphothreonine is present on threonine 41. Annexin repeat units follow at residues 42–113, 114–185, 197–269, and 273–344; these read FNPS…ALLK, TPAQ…SLAK, DLAD…AIVK, and SKPA…ALCG. Lysine 58 is modified (N6-acetyllysine). Ca(2+) is bound by residues glycine 59, valine 60, glutamate 62, lysine 97, leucine 100, glutamate 105, methionine 127, glycine 129, glycine 131, threonine 132, and glutamate 134. Threonine 136 bears the Phosphothreonine mark. Ca(2+) is bound by residues aspartate 171, glycine 210, and arginine 213. Lysine 214 participates in a covalent cross-link: Glycyl lysine isopeptide (Lys-Gly) (interchain with G-Cter in SUMO1); alternate. Residue lysine 214 forms a Glycyl lysine isopeptide (Lys-Gly) (interchain with G-Cter in SUMO2); alternate linkage. Glycine 215 lines the Ca(2+) pocket. N6-acetyllysine is present on lysine 239. Residues aspartate 253, glutamate 255, and leucine 256 each contribute to the Ca(2+) site. Lysine 257 participates in a covalent cross-link: Glycyl lysine isopeptide (Lys-Gly) (interchain with G-Cter in SUMO1). Residues glutamate 261, methionine 286, glycine 288, and glycine 290 each contribute to the Ca(2+) site. At lysine 312 the chain carries N6-acetyllysine. Cysteine 324 and cysteine 343 are disulfide-bonded. Positions 328, 330, and 331 each coordinate Ca(2+). A Glycyl lysine isopeptide (Lys-Gly) (interchain with G-Cter in SUMO1) cross-link involves residue lysine 332. Glutamate 336 contributes to the Ca(2+) binding site.

It belongs to the annexin family. In terms of assembly, homodimer; non-covalently linked. Homodimer; linked by transglutamylation. Homodimers linked by transglutamylation are observed in placenta, but not in other tissues. Interacts with S100A11. Heterotetramer, formed by two molecules each of S100A11 and ANXA1. Interacts with DYSF. Interacts with EGFR. Post-translationally, phosphorylated by protein kinase C, EGFR and TRPM7. Phosphorylated in response to EGF treatment. In terms of processing, sumoylated. Proteolytically cleaved by cathepsin CTSG to release the active N-terminal peptide Ac2-26. Detected in resting neutrophils. Detected in peripheral blood T-cells. Detected in extracellular vesicles in blood serum from patients with inflammatory bowel disease, but not in serum from healthy donors. Detected in placenta (at protein level). Detected in liver.

Its subcellular location is the nucleus. The protein localises to the cytoplasm. It is found in the cell projection. The protein resides in the cilium. It localises to the cell membrane. Its subcellular location is the membrane. The protein localises to the endosome membrane. It is found in the basolateral cell membrane. The protein resides in the apical cell membrane. It localises to the lateral cell membrane. Its subcellular location is the secreted. The protein localises to the extracellular space. It is found in the extracellular exosome. The protein resides in the cytoplasmic vesicle. It localises to the secretory vesicle lumen. Its subcellular location is the phagocytic cup. The protein localises to the early endosome. It is found in the cytoplasmic vesicle membrane. Functionally, plays important roles in the innate immune response as effector of glucocorticoid-mediated responses and regulator of the inflammatory process. Has anti-inflammatory activity. Plays a role in glucocorticoid-mediated down-regulation of the early phase of the inflammatory response. Contributes to the adaptive immune response by enhancing signaling cascades that are triggered by T-cell activation, regulates differentiation and proliferation of activated T-cells. Promotes the differentiation of T-cells into Th1 cells and negatively regulates differentiation into Th2 cells. Has no effect on unstimulated T cells. Negatively regulates hormone exocytosis via activation of the formyl peptide receptors and reorganization of the actin cytoskeleton. Has high affinity for Ca(2+) and can bind up to eight Ca(2+) ions. Displays Ca(2+)-dependent binding to phospholipid membranes. Plays a role in the formation of phagocytic cups and phagosomes. Plays a role in phagocytosis by mediating the Ca(2+)-dependent interaction between phagosomes and the actin cytoskeleton. Its function is as follows. Functions at least in part by activating the formyl peptide receptors and downstream signaling cascades. Promotes chemotaxis of granulocytes and monocytes via activation of the formyl peptide receptors. Promotes rearrangement of the actin cytoskeleton, cell polarization and cell migration. Promotes resolution of inflammation and wound healing. Acts via neutrophil N-formyl peptide receptors to enhance the release of CXCL2. The sequence is that of Annexin A1 (ANXA1) from Homo sapiens (Human).